The following is a 235-amino-acid chain: tRNA (guanine-N(1)-)-methyltransferase (235 aa).

S-adenosyl-L-methionine is bound by residues Gly-114 and 134 to 139 (VGDYIL).

Belongs to the RNA methyltransferase TrmD family. Homodimer.

The protein localises to the cytoplasm. The catalysed reaction is guanosine(37) in tRNA + S-adenosyl-L-methionine = N(1)-methylguanosine(37) in tRNA + S-adenosyl-L-homocysteine + H(+). Functionally, specifically methylates guanosine-37 in various tRNAs. This Chelativorans sp. (strain BNC1) protein is tRNA (guanine-N(1)-)-methyltransferase.